Here is a 134-residue protein sequence, read N- to C-terminus: Proline-rich protein 4 (134 aa).

The first 16 residues, 1–16 (MLLVLLSVVLLALSSA), serve as a signal peptide directing secretion. Residues 28–134 (FTFTIPDVED…ARHPQEQPLW (107 aa)) form a disordered region. The span at 47–59 (QRPPPEGLLPRPP) shows a compositional bias: pro residues. The segment covering 110-119 (VSLQEASSFF) has biased composition (polar residues). Over residues 120–134 (QRDRPARHPQEQPLW) the composition is skewed to basic and acidic residues.

As to expression, abundantly expressed in lacrimal gland where it is found in the acinar cells but not in the intralobular ducts. Also found in the submandibular gland, the parotid and sublingual glands.

It is found in the secreted. The protein is Proline-rich protein 4 (PRR4) of Homo sapiens (Human).